The sequence spans 280 residues: Undecaprenyl-diphosphatase (280 aa).

Transmembrane regions (helical) follow at residues 1-21 (MEWIQAAILGIVQGLTEFLPI), 40-60 (GAAFTAVSQLGTEAAVIVFFW), 89-109 (WLVVAGSIPIIVVGLFFQNAI), 116-136 (LWIVATTLIVFGVILAVADAV), 146-166 (LTVKHGILYGLAQCLALIPGV), 191-211 (FLLAIPAVLGSGFYELFKIVA), 227-247 (LATVIAFVVGYLIIGWFLKFI), and 260-280 (IALGLVVFVLLGFGVIPATLS).

It belongs to the UppP family.

Its subcellular location is the cell membrane. It catalyses the reaction di-trans,octa-cis-undecaprenyl diphosphate + H2O = di-trans,octa-cis-undecaprenyl phosphate + phosphate + H(+). Functionally, catalyzes the dephosphorylation of undecaprenyl diphosphate (UPP). Confers resistance to bacitracin. This chain is Undecaprenyl-diphosphatase, found in Renibacterium salmoninarum (strain ATCC 33209 / DSM 20767 / JCM 11484 / NBRC 15589 / NCIMB 2235).